A 407-amino-acid chain; its full sequence is Putative colanic acid biosynthesis glycosyl transferase WcaI (407 aa).

The protein operates within slime biogenesis; slime polysaccharide biosynthesis. The protein is Putative colanic acid biosynthesis glycosyl transferase WcaI (wcaI) of Escherichia coli (strain K12).